A 209-amino-acid polypeptide reads, in one-letter code: Transcription antitermination protein NusB (209 aa).

This sequence belongs to the NusB family.

Involved in transcription antitermination. Required for transcription of ribosomal RNA (rRNA) genes. Binds specifically to the boxA antiterminator sequence of the ribosomal RNA (rrn) operons. This Cyanothece sp. (strain PCC 7425 / ATCC 29141) protein is Transcription antitermination protein NusB.